The chain runs to 119 residues: HTH-type transcriptional regulator SarX (119 aa).

A DNA-binding region (H-T-H motif) is located at residues 55–78 (LKTAMDELDLSRTKLLVSIRRLIE).

It belongs to the SarA family.

It is found in the cytoplasm. In terms of biological role, involved in the regulation of virulence genes. Acts as a repressor of the agr locus and consequently targets genes regulated by the agr system such as sspA, hla and hlb. Binds directly to the agr promoter region. The sequence is that of HTH-type transcriptional regulator SarX (sarX) from Staphylococcus aureus (strain USA300).